The sequence spans 120 residues: MDIFLCPVCQSGYRYFYTLYLPNNNIDVILFCDECECVWIDPEYIDYQDAVSNDFLVDKYKVTSCKILFNKEISGWSTNKDIKNSRWDNFIENYEQFVFQNIYHLDKNKRYPFLYLYATN.

It is found in the virion. This is an uncharacterized protein from Acanthamoeba polyphaga mimivirus (APMV).